The primary structure comprises 753 residues: Synaptotagmin-like protein 5 (753 aa).

The region spanning 7–123 (FINLSFLLDH…IISGEWFLEE (117 aa)) is the RabBD domain. The FYVE-type zinc finger occupies 64-106 (CVHCQKSLGLIFDRGAPCQACSLRVCSECRVTGLDGSWKCTVC). Disordered stretches follow at residues 145–188 (RRSP…GFLL), 221–283 (SFKS…GFEN), and 298–359 (TKSH…LNSL). At Ser-147 the chain carries Phosphoserine. Over residues 224–238 (SVSGSDRGSTTSSDL) the composition is skewed to low complexity. Composition is skewed to polar residues over residues 260-275 (TQRS…TSIS) and 305-316 (TSGTPSIAVSGT). C2 domains lie at 429-550 (VTGE…DEWF) and 590-717 (PQGK…VDWM).

In terms of assembly, binds RAB27A that has been activated by GTP-binding.

The protein resides in the membrane. Its function is as follows. May act as Rab effector protein and play a role in vesicle trafficking. Binds phospholipids. The polypeptide is Synaptotagmin-like protein 5 (Sytl5) (Rattus norvegicus (Rat)).